Reading from the N-terminus, the 615-residue chain is Medium-chain acyl-CoA ligase ACSF2, mitochondrial (615 aa).

The N-terminal 42 residues, Met1–Leu42, are a transit peptide targeting the mitochondrion. Residue Lys179 is modified to N6-acetyllysine. Lys182 carries the N6-acetyllysine; alternate modification. Lys182 is subject to N6-succinyllysine; alternate. N6-acetyllysine is present on Lys199. Thr263 to Lys271 serves as a coordination point for ATP. N6-acetyllysine is present on residues Lys340 and Lys398. Lys478 bears the N6-succinyllysine mark. 2 residues coordinate ATP: Asp493 and Arg508. Residue Lys510 is modified to N6-acetyllysine. Residues Lys544 and Lys570 each carry the N6-acetyllysine; alternate modification. N6-succinyllysine; alternate is present on residues Lys544 and Lys570. Residue Lys599 participates in ATP binding. Lys599 carries the post-translational modification N6-succinyllysine.

This sequence belongs to the ATP-dependent AMP-binding enzyme family.

It localises to the mitochondrion. It catalyses the reaction a medium-chain fatty acid + ATP + CoA = a medium-chain fatty acyl-CoA + AMP + diphosphate. The enzyme catalyses octanoate + ATP + CoA = octanoyl-CoA + AMP + diphosphate. In terms of biological role, acyl-CoA synthases catalyze the initial reaction in fatty acid metabolism, by forming a thioester with CoA. Has some preference toward medium-chain substrates. Plays a role in adipocyte differentiation. The polypeptide is Medium-chain acyl-CoA ligase ACSF2, mitochondrial (Bos taurus (Bovine)).